The primary structure comprises 277 residues: GATA transcription factor 15 (277 aa).

The tract at residues 52-94 (AYDDHSTVTTSPSSPSSSSTGSVDCTLSLGTPSSRRAEPVAAA) is disordered. Over residues 58 to 74 (TVTTSPSSPSSSSTGSV) the composition is skewed to low complexity. Residues 154 to 179 (CANCGTASTPLWRNGPRGPKSLCNAC) form a GATA-type zinc finger.

The protein belongs to the type IV zinc-finger family. Class B subfamily.

Functionally, probable transcription factor that regulates organogenesis during transition from the vegetative to the reproductive phase. Regulates the expression of CYP78A11/PLA1, HD3A and MADS1 during reproductive development in rice. May act upstream of CYP78A11/PLA1 during panicle development. Acts independently of the photoperiodic and gibberellin signaling pathways. This Oryza sativa subsp. indica (Rice) protein is GATA transcription factor 15.